A 160-amino-acid chain; its full sequence is MASNSTADGKDRFFSALIYVIPLIDAFMFGGFLLQQFPVLQIIYLPIMPLLQFYYQFPFASFIIFIVLFMAVVRNNNISHFIRFNAMQAILIGILLSLFGLIVAYVIQPVFGQGLVTETLYNFAFLGALACGFFGIVQSVLGRYAEIPTISDAAYSQVRF.

Transmembrane regions (helical) follow at residues 13 to 33, 53 to 73, 87 to 107, and 122 to 142; these read FFSA…GGFL, FYYQ…MAVV, MQAI…AYVI, and NFAF…SVLG.

The protein belongs to the Tic20 family.

The protein resides in the cell membrane. This chain is Tic20 family protein, found in Synechocystis sp. (strain ATCC 27184 / PCC 6803 / Kazusa).